Reading from the N-terminus, the 406-residue chain is NADH-quinone oxidoreductase subunit D (406 aa).

Belongs to the complex I 49 kDa subunit family. In terms of assembly, NDH-1 is composed of 14 different subunits. Subunits NuoB, C, D, E, F, and G constitute the peripheral sector of the complex.

It is found in the cell inner membrane. It carries out the reaction a quinone + NADH + 5 H(+)(in) = a quinol + NAD(+) + 4 H(+)(out). Functionally, NDH-1 shuttles electrons from NADH, via FMN and iron-sulfur (Fe-S) centers, to quinones in the respiratory chain. The immediate electron acceptor for the enzyme in this species is believed to be ubiquinone. Couples the redox reaction to proton translocation (for every two electrons transferred, four hydrogen ions are translocated across the cytoplasmic membrane), and thus conserves the redox energy in a proton gradient. The protein is NADH-quinone oxidoreductase subunit D of Leptospira biflexa serovar Patoc (strain Patoc 1 / Ames).